A 1305-amino-acid polypeptide reads, in one-letter code: MDSVPRLNSVFTLVLSGLWHFGLTATNYNCDDPLTSFLSLRAFSSSSDLTGRSSPAQLNWRMGTGGWSPADSNAQQWLQMDLGNRVEITAVATQGRYGSSDWVTSYRLMFSDTGHNWQQYTQEGSIWRFVGNMNANSVVHHKLLNSVRARFVRFVPLEWNPNGKIGMRVEVYGCSYRSDVADFDGWSSLLYRFNQKTMSTLKDVISLKFKSIQRDGVLFHGEGQRGDHITLELQNGRLALYLNLDDSKAQVSSTAPLATLGSLLDDQHWHSVLLERVGKQANFTVDKNTQHFQTKGETDALDIDYELSFGGIPVPSKPGTFLKKNFHGCIENLYYNGVNIIDLAKRRKHQIYSGNVTFSCSEPQTVPITFVNSRSSYLLLTGTPQIDGLSVSFQFRTWNEDGLLLSTELSEGSGTLLLILEGGTLRLLIKKLARHGTEIFTGSGLNDGMWHSVSISARRNRVTLTLDNDAASLPPDTSWLQIYSGNSYYFGGCPDNLTDSQCLNPIKAFQGCMRLIFIDNQPKDLISVQQGSLGSFSDLHIDLCSIKDRCLPNYCEHGGQCAQTWTNFYCNCSDTGYTGATCHDSIYEQSCEVYRHRGKTAEFFYVDSDGSGPLGPLQVFCNITEDKIWMTVQHNNTGLTWVQGSNPEKPYAMTLNYGGSLEQLEALIDGSEHCEQEVTYYCKRSRLLNTPDGVPFTWWIGRSNEKHPYWGGSLPGVQQCGCGLEESCLDIRHFCNCDADTDEWTNDTGYLSFKDHLPVTQIIITDTNRSKSEAAWRIGPLRCYGDRHFWNAVSFSTEASFLHFPTFRVEFSADIFFFFKTTALSGVFLEILGIKDFLRLEMSSPSEVIFAIDVGNGPIDLLVQSPYPLNDNQWHYIRAERNLKETSLQVDNLPQSMREASEEGHFQFQLNSQLFVGGKSSRQKGFFGCIRSLHLNGQNIDLEERAKVTSGVRPGCPGHCSSYGRNCQNGGKCVEKHIGYSCDCTNSPYEGPFCQKEISALFDSDTSVTYMFQEPYSVTKNTNLSSSAIYTDTAPSKEIIMLSFMTAQAPTLLLYLNFSSQNFLAILLSWNGSLQIHYQLSKEESHVFTINTENLANRRVHQVKMSRDGPELSIQMDQQLFSYTFSLESEFQRARSLVLGKVTETLGLDPEVARANTLGFVGCLSSVQYNHITPLKAALRHASISPVTVQRTLTESSCVSMVDSDANAVTTVYSSTDPFGERDEREPLTNAVPSDLAVIGGIIAVVTFISFSVIGIMTHFFYQHKRSHYASQMKEKEYPENVDSSSRNDIDLQNTTRECKQEDFI.

A signal peptide spans 1–24 (MDSVPRLNSVFTLVLSGLWHFGLT). An F5/8 type C domain is found at 25 to 174 (ATNYNCDDPL…IGMRVEVYGC (150 aa)). Topologically, residues 25–1235 (ATNYNCDDPL…EPLTNAVPSD (1211 aa)) are extracellular. 2 consecutive Laminin G-like domains span residues 180–360 (VADF…TFSC) and 367–544 (PITF…IDLC). An N-linked (GlcNAc...) asparagine glycan is attached at asparagine 282. A disulfide bond links cysteine 329 and cysteine 360. A glycan (N-linked (GlcNAc...) asparagine) is linked at asparagine 496. 3 cysteine pairs are disulfide-bonded: cysteine 512–cysteine 544, cysteine 550–cysteine 561, and cysteine 555–cysteine 570. One can recognise an EGF-like 1 domain in the interval 546–583 (IKDRCLPNYCEHGGQCAQTWTNFYCNCSDTGYTGATCH). The N-linked (GlcNAc...) asparagine glycan is linked to asparagine 571. Cysteine 572 and cysteine 582 are disulfide-bonded. Residues 584–790 (DSIYEQSCEV…LRCYGDRHFW (207 aa)) enclose the Fibrinogen C-terminal domain. A Laminin G-like 3 domain is found at 791-956 (NAVSFSTEAS…KVTSGVRPGC (166 aa)). Intrachain disulfides connect cysteine 929–cysteine 956, cysteine 960–cysteine 973, cysteine 967–cysteine 982, and cysteine 984–cysteine 994. The EGF-like 2 domain maps to 957–995 (PGHCSSYGRNCQNGGKCVEKHIGYSCDCTNSPYEGPFCQ). The Laminin G-like 4 domain occupies 1013–1198 (QEPYSVTKNT…VQRTLTESSC (186 aa)). Asparagine 1023 and asparagine 1057 each carry an N-linked (GlcNAc...) asparagine glycan. An intrachain disulfide couples cysteine 1163 to cysteine 1198. The chain crosses the membrane as a helical span at residues 1236 to 1256 (LAVIGGIIAVVTFISFSVIGI). The Cytoplasmic segment spans residues 1257-1305 (MTHFFYQHKRSHYASQMKEKEYPENVDSSSRNDIDLQNTTRECKQEDFI).

It belongs to the neurexin family. In terms of tissue distribution, expressed in brain.

It localises to the membrane. In terms of biological role, may play a role in the correct development and proper functioning of the peripheral and central nervous system and be involved in cell adhesion and intercellular communication. This chain is Contactin-associated protein like 5-3 (Cntnap5c), found in Mus musculus (Mouse).